The chain runs to 285 residues: Ribosomal RNA small subunit methyltransferase A (285 aa).

Asn-21, Leu-23, Gly-48, Glu-69, Asp-94, and Asn-127 together coordinate S-adenosyl-L-methionine.

It belongs to the class I-like SAM-binding methyltransferase superfamily. rRNA adenine N(6)-methyltransferase family. RsmA subfamily.

Its subcellular location is the cytoplasm. It carries out the reaction adenosine(1518)/adenosine(1519) in 16S rRNA + 4 S-adenosyl-L-methionine = N(6)-dimethyladenosine(1518)/N(6)-dimethyladenosine(1519) in 16S rRNA + 4 S-adenosyl-L-homocysteine + 4 H(+). Its function is as follows. Specifically dimethylates two adjacent adenosines (A1518 and A1519) in the loop of a conserved hairpin near the 3'-end of 16S rRNA in the 30S particle. May play a critical role in biogenesis of 30S subunits. The protein is Ribosomal RNA small subunit methyltransferase A of Koribacter versatilis (strain Ellin345).